A 421-amino-acid chain; its full sequence is Gamma-glutamyl phosphate reductase (421 aa).

The protein belongs to the gamma-glutamyl phosphate reductase family.

Its subcellular location is the cytoplasm. The catalysed reaction is L-glutamate 5-semialdehyde + phosphate + NADP(+) = L-glutamyl 5-phosphate + NADPH + H(+). The protein operates within amino-acid biosynthesis; L-proline biosynthesis; L-glutamate 5-semialdehyde from L-glutamate: step 2/2. Functionally, catalyzes the NADPH-dependent reduction of L-glutamate 5-phosphate into L-glutamate 5-semialdehyde and phosphate. The product spontaneously undergoes cyclization to form 1-pyrroline-5-carboxylate. The polypeptide is Gamma-glutamyl phosphate reductase (Pseudomonas aeruginosa (strain ATCC 15692 / DSM 22644 / CIP 104116 / JCM 14847 / LMG 12228 / 1C / PRS 101 / PAO1)).